Consider the following 363-residue polypeptide: RNA exonuclease NGL1 (363 aa).

A mitochondrion-targeting transit peptide spans 1 to 23 (MFTRRFIPVVQSTKQNIGKYVRK).

It belongs to the CCR4/nocturin family.

The protein localises to the mitochondrion. In Saccharomyces cerevisiae (strain ATCC 204508 / S288c) (Baker's yeast), this protein is RNA exonuclease NGL1 (NGL1).